Consider the following 356-residue polypeptide: tRNA N6-adenosine threonylcarbamoyltransferase (356 aa).

Residues histidine 115 and histidine 119 each coordinate Fe cation. Substrate contacts are provided by residues 138 to 142, aspartate 171, glycine 184, and asparagine 277; that span reads LVSGG. A Fe cation-binding site is contributed by aspartate 305.

This sequence belongs to the KAE1 / TsaD family. Requires Fe(2+) as cofactor.

It localises to the cytoplasm. It carries out the reaction L-threonylcarbamoyladenylate + adenosine(37) in tRNA = N(6)-L-threonylcarbamoyladenosine(37) in tRNA + AMP + H(+). Functionally, required for the formation of a threonylcarbamoyl group on adenosine at position 37 (t(6)A37) in tRNAs that read codons beginning with adenine. Is involved in the transfer of the threonylcarbamoyl moiety of threonylcarbamoyl-AMP (TC-AMP) to the N6 group of A37, together with TsaE and TsaB. TsaD likely plays a direct catalytic role in this reaction. The sequence is that of tRNA N6-adenosine threonylcarbamoyltransferase from Polaromonas naphthalenivorans (strain CJ2).